Reading from the N-terminus, the 224-residue chain is MSVFGKLFGGGGKGGKGPTPQEAIQKLRETEEMLAKKQDFLEKKIDAELLIAKKNGTKNKRAALQALKRKKRYEKQLAQIDGTLSTIEFQREALENANTNTEVLKNMGFAAKAMKTAHENMDIDKVDDLMQDITEQQELAQEISDAISRPVGFGEEFDEDELMAELEELEQEELDKDLLQISGPEDVPLPNVPSNPLPKKTAVAQKKRQEEDEDDMEELKAWAM.

Disordered regions lie at residues 1–21 (MSVFGKLFGGGGKGGKGPTPQ) and 182–224 (SGPE…AWAM). The span at 7-17 (LFGGGGKGGKG) shows a compositional bias: gly residues. Positions 21–221 (QEAIQKLRET…DEDDMEELKA (201 aa)) form a coiled coil.

Belongs to the SNF7 family. In terms of assembly, probable core component of the endosomal sorting required for transport complex III (ESCRT-III). ESCRT-III components are thought to multimerize to form a flat lattice on the perimeter membrane of the endosome.

Its subcellular location is the cytoplasm. It is found in the cytosol. The protein localises to the late endosome membrane. In terms of biological role, probable core component of the endosomal sorting required for transport complex III (ESCRT-III) which is involved in multivesicular bodies (MVBs) formation and sorting of endosomal cargo proteins into MVBs. MVBs contain intraluminal vesicles (ILVs) that are generated by invagination and scission from the limiting membrane of the endosome and mostly are delivered to lysosomes enabling degradation of membrane proteins, such as stimulated growth factor receptors, lysosomal enzymes and lipids. Key component of the cytokinesis checkpoint, a process required to delay abscission to prevent both premature resolution of intercellular chromosome bridges and accumulation of DNA damage. This chain is Charged multivesicular body protein 4c (chmp4c), found in Danio rerio (Zebrafish).